Reading from the N-terminus, the 72-residue chain is Alpha-elapitoxin-Dv2b (72 aa).

5 disulfide bridges follow: Cys3/Cys21, Cys14/Cys42, Cys27/Cys31, Cys46/Cys57, and Cys58/Cys63.

This sequence belongs to the three-finger toxin family. Long-chain subfamily. Type II alpha-neurotoxin sub-subfamily. Post-translationally, neurotoxin 4.7.3 differs from 4.9.3 only in that Trp-26 has undergone partial photooxidation. As to expression, expressed by the venom gland.

The protein resides in the secreted. In terms of biological role, binds with high affinity to muscular (alpha-1/CHRNA1) and neuronal (alpha-7/CHRNA7) nicotinic acetylcholine receptor (nAChR) and inhibits acetylcholine from binding to the receptor, thereby impairing neuromuscular and neuronal transmission. In Dendroaspis viridis (Western green mamba), this protein is Alpha-elapitoxin-Dv2b.